The primary structure comprises 128 residues: Ribosome-binding factor A (128 aa).

It belongs to the RbfA family. In terms of assembly, monomer. Binds 30S ribosomal subunits, but not 50S ribosomal subunits or 70S ribosomes.

It is found in the cytoplasm. In terms of biological role, one of several proteins that assist in the late maturation steps of the functional core of the 30S ribosomal subunit. Associates with free 30S ribosomal subunits (but not with 30S subunits that are part of 70S ribosomes or polysomes). Required for efficient processing of 16S rRNA. May interact with the 5'-terminal helix region of 16S rRNA. This is Ribosome-binding factor A from Pseudomonas paraeruginosa (strain DSM 24068 / PA7) (Pseudomonas aeruginosa (strain PA7)).